The chain runs to 282 residues: Armadillo repeat-containing protein 1 (282 aa).

Met-1 carries the post-translational modification N-acetylmethionine. The stretch at 39 to 81 is one ARM repeat; sequence GCLPGLILFMDHPNPPVVHSALLALRYLAECRANREKMKGELG. Thr-137 bears the Phosphothreonine mark. Ser-189, Ser-246, Ser-260, and Ser-267 each carry phosphoserine. Positions 239-261 are disordered; the sequence is DYLPEDESPTKEQDKAVSRVGSH. Over residues 246–255 the composition is skewed to basic and acidic residues; sequence SPTKEQDKAV.

As to quaternary structure, interacts with mitochondrial contact site and cristae organizing system (MICOS) complex components IMMT/MIC60 and MICOS10/MIC10. Interacts with mitochondrial outer membrane sorting assembly machinery (SAM) complex components SAMM50 and MTX1.

It is found in the cytoplasm. Its subcellular location is the mitochondrion. The protein resides in the mitochondrion outer membrane. Functionally, in association with mitochondrial contact site and cristae organizing system (MICOS) complex components and mitochondrial outer membrane sorting assembly machinery (SAM) complex components may regulate mitochondrial dynamics playing a role in determining mitochondrial length, distribution and motility. The polypeptide is Armadillo repeat-containing protein 1 (ARMC1) (Bos taurus (Bovine)).